A 254-amino-acid chain; its full sequence is Imidazole glycerol phosphate synthase subunit HisF (254 aa).

Active-site residues include Asp11 and Asp130.

This sequence belongs to the HisA/HisF family. In terms of assembly, heterodimer of HisH and HisF.

It is found in the cytoplasm. The enzyme catalyses 5-[(5-phospho-1-deoxy-D-ribulos-1-ylimino)methylamino]-1-(5-phospho-beta-D-ribosyl)imidazole-4-carboxamide + L-glutamine = D-erythro-1-(imidazol-4-yl)glycerol 3-phosphate + 5-amino-1-(5-phospho-beta-D-ribosyl)imidazole-4-carboxamide + L-glutamate + H(+). It functions in the pathway amino-acid biosynthesis; L-histidine biosynthesis; L-histidine from 5-phospho-alpha-D-ribose 1-diphosphate: step 5/9. IGPS catalyzes the conversion of PRFAR and glutamine to IGP, AICAR and glutamate. The HisF subunit catalyzes the cyclization activity that produces IGP and AICAR from PRFAR using the ammonia provided by the HisH subunit. This is Imidazole glycerol phosphate synthase subunit HisF from Trichlorobacter lovleyi (strain ATCC BAA-1151 / DSM 17278 / SZ) (Geobacter lovleyi).